The sequence spans 211 residues: Superoxide dismutase [Mn] (211 aa).

His27, His82, Asp165, and His169 together coordinate Mn(2+).

It belongs to the iron/manganese superoxide dismutase family. As to quaternary structure, homodimer. Mn(2+) serves as cofactor.

It catalyses the reaction 2 superoxide + 2 H(+) = H2O2 + O2. Its function is as follows. Destroys superoxide anion radicals which are normally produced within the cells and which are toxic to biological systems. In Bordetella pertussis (strain Tohama I / ATCC BAA-589 / NCTC 13251), this protein is Superoxide dismutase [Mn] (sodA).